The chain runs to 149 residues: YbbR-like domain-containing protein in def 5'region (149 aa).

Residues I1–E68 enclose the YbbR-like domain.

The polypeptide is YbbR-like domain-containing protein in def 5'region (Thermus thermophilus).